The chain runs to 294 residues: Cytidine deaminase (294 aa).

CMP/dCMP-type deaminase domains follow at residues 48-168 (DEDA…FGPK) and 186-294 (LTGD…VLLA). 89 to 91 (NME) provides a ligand contact to substrate. Residue His-102 participates in Zn(2+) binding. The active-site Proton donor is Glu-104. The Zn(2+) site is built by Cys-129 and Cys-132.

This sequence belongs to the cytidine and deoxycytidylate deaminase family. In terms of assembly, homodimer. The cofactor is Zn(2+).

It carries out the reaction cytidine + H2O + H(+) = uridine + NH4(+). It catalyses the reaction 2'-deoxycytidine + H2O + H(+) = 2'-deoxyuridine + NH4(+). This enzyme scavenges exogenous and endogenous cytidine and 2'-deoxycytidine for UMP synthesis. The chain is Cytidine deaminase from Shigella dysenteriae serotype 1 (strain Sd197).